The chain runs to 250 residues: UPF0758 protein tlr1707 (250 aa).

The region spanning 116–239 (TIIDSPALAA…YQSLREITPL (124 aa)) is the MPN domain. Residues histidine 188, histidine 190, and aspartate 201 each coordinate Zn(2+). The JAMM motif signature appears at 188–201 (HNHPSGNLSPSQAD).

It belongs to the UPF0758 family.

The protein is UPF0758 protein tlr1707 of Thermosynechococcus vestitus (strain NIES-2133 / IAM M-273 / BP-1).